Reading from the N-terminus, the 311-residue chain is HTH-type transcriptional regulator PcaQ (311 aa).

The HTH lysR-type domain maps to 6–63 (IKFRHLQTFVEVARQKSVIRAAEILHVSQPAVTKTIRELEDVLGVSLLEREGRGIRIS). The segment at residues 23–42 (VIRAAEILHVSQPAVTKTIR) is a DNA-binding region (H-T-H motif).

Belongs to the LysR transcriptional regulatory family.

Its function is as follows. Activates transcription of the pcaDCHGB operon for the catabolism of the phenolic compound protocatechuate. The chain is HTH-type transcriptional regulator PcaQ (pcaQ) from Agrobacterium fabrum (strain C58 / ATCC 33970) (Agrobacterium tumefaciens (strain C58)).